The primary structure comprises 339 residues: Large ribosomal subunit protein uL29 (339 aa).

The tract at residues 1–96 (MNDLTKKSVE…FAKQRKAKIE (96 aa)) is large ribosomal subunit protein uL29. Residues 97-339 (QMMAEQQAAE…KTTKKGTGKK (243 aa)) are unknown. Disordered stretches follow at residues 129–254 (VVST…VPTK) and 311–339 (KENR…TGKK). Positions 145–156 (APVAAKKPAAAK) are enriched in low complexity. The span at 157-170 (DFPKQKDVVEEKTA) shows a compositional bias: basic and acidic residues. Positions 171 to 182 (TGKPAAPSAKKA) are enriched in low complexity. Residues 185–210 (AKKDVAQETKTDKDAALKALIKEKAA) are compositionally biased toward basic and acidic residues. The segment covering 217-238 (KSKTSTPSGKTTVTVKSVTSAK) has biased composition (low complexity). The segment covering 239 to 248 (ADIEVPKETS) has biased composition (basic and acidic residues).

This sequence belongs to the universal ribosomal protein uL29 family. As to quaternary structure, forms homomultimers. Part of the ribosome; radioactive IRS binds to purified ribosomes.

Specifically binds a DNA inverted repeat sequence (IRS) found downstream of rpsB in one of the ribosomal subunit operons (for genes rpsB, tsf, and unknown gene x). Might be involved in regulation of transcription of the rpsB operon; the IRS may be a control element to attenuate transcription. This is Large ribosomal subunit protein uL29 from Spiroplasma citri.